Here is a 66-residue protein sequence, read N- to C-terminus: Large ribosomal subunit protein bL31 (66 aa).

Residues Cys-16, Cys-18, Cys-36, and Cys-39 each coordinate Zn(2+).

Belongs to the bacterial ribosomal protein bL31 family. Type A subfamily. As to quaternary structure, part of the 50S ribosomal subunit. Requires Zn(2+) as cofactor.

In terms of biological role, binds the 23S rRNA. In Campylobacter curvus (strain 525.92), this protein is Large ribosomal subunit protein bL31.